Consider the following 551-residue polypeptide: Probable glucomannan 4-beta-mannosyltransferase 3 (551 aa).

Residues 60-80 traverse the membrane as a helical segment; sequence ACLALSAMLLADAVLMAAACF. Asp154 is an active-site residue. The substrate site is built by Asp213 and Asp215. The active site involves Asp307. The next 4 helical transmembrane spans lie at 386–406, 409–429, 504–524, and 525–545; these read VVAH…SVLI, VTVP…LHAI, ILFS…GGDY, and YFVY…GFCG.

It belongs to the glycosyltransferase 2 family. Plant cellulose synthase-like A subfamily.

It is found in the golgi apparatus membrane. The enzyme catalyses GDP-mannose + (glucomannan)n = GDP + (glucomannan)n+1.. Its function is as follows. Probable mannan synthase which consists of a 4-beta-mannosyltransferase activity on mannan using GDP-mannose. The beta-1,4-mannan product is the backbone for galactomannan synthesis by galactomannan galactosyltransferase. Galactomannan is a noncellulosic polysaccharides of plant cell wall. The sequence is that of Probable glucomannan 4-beta-mannosyltransferase 3 from Oryza sativa subsp. japonica (Rice).